A 38-amino-acid polypeptide reads, in one-letter code: Large ribosomal subunit protein bL36 (38 aa).

The protein belongs to the bacterial ribosomal protein bL36 family.

The sequence is that of Large ribosomal subunit protein bL36 from Myxococcus xanthus (strain DK1622).